We begin with the raw amino-acid sequence, 225 residues long: Large ribosomal subunit protein mL58 (225 aa).

Residues 106–138 (PQAPITTPESSSTDAAAADQHGDLPPVLYNPTK) are disordered. The segment covering 109-119 (PITTPESSSTD) has biased composition (polar residues).

Belongs to the mitochondrion-specific ribosomal protein mL58 family. Component of the mitochondrial large ribosomal subunit (mt-LSU). Mature N.crassa 74S mitochondrial ribosomes consist of a small (37S) and a large (54S) subunit. The 37S small subunit contains a 16S ribosomal RNA (16S mt-rRNA) and 32 different proteins. The 54S large subunit contains a 23S rRNA (23S mt-rRNA) and 42 different proteins.

It is found in the mitochondrion. Functionally, component of the mitochondrial ribosome (mitoribosome), a dedicated translation machinery responsible for the synthesis of mitochondrial genome-encoded proteins, including at least some of the essential transmembrane subunits of the mitochondrial respiratory chain. The mitoribosomes are attached to the mitochondrial inner membrane and translation products are cotranslationally integrated into the membrane. The protein is Large ribosomal subunit protein mL58 (mrpl20) of Neurospora crassa (strain ATCC 24698 / 74-OR23-1A / CBS 708.71 / DSM 1257 / FGSC 987).